The following is a 404-amino-acid chain: MEAGEEPLLLAELKPGRPHQFDWKSSCETWSVAFSPDGSWFAWSQGHCVVKLVPWPLEEQFIPKGFEAKSRSSKNDPKGRGSLKEKTLDCGQIVWGLAFSPWPSPPSRKLWARHHPQAPDVSCLILATGLNDGQIKIWEVQTGLLLLNLSGHQDVVRDLSFTPSGSLILVSASRDKTLRIWDLNKHGKQIQVLSGHLQWVYCCSISPDCSMLCSAAGEKSVFLWSMRSYTLIRKLEGHQSSVVSCDFSPDSALLVTASYDTSVIMWDPYTGERLRSLHHTQLEPTMDDSDVHMSSLRSVCFSPEGLYLATVADDRLLRIWALELKAPVAFAPMTNGLCCTFFPHGGIIATGTRDGHVQFWTAPRVLSSLKHLCRKALRSFLTTYQVLALPIPKKMKEFLTYRTF.

WD repeat units follow at residues 105-148 (PPSR…LLLN), 151-191 (GHQD…KQIQ), 195-234 (GHLQ…LIRK), 237-276 (GHQS…RLRS), and 291-330 (VHMS…PVAF). The 49-residue stretch at 356-404 (HVQFWTAPRVLSSLKHLCRKALRSFLTTYQVLALPIPKKMKEFLTYRTF) folds into the SOCS box domain.

It functions in the pathway protein modification; protein ubiquitination. Its function is as follows. May be a substrate-recognition component of a SCF-like ECS (Elongin-Cullin-SOCS-box protein) E3 ubiquitin ligase complex which mediates the ubiquitination and subsequent proteasomal degradation of target proteins. This Mus musculus (Mouse) protein is WD repeat and SOCS box-containing protein 2 (Wsb2).